Here is a 308-residue protein sequence, read N- to C-terminus: Ornithine carbamoyltransferase (308 aa).

Residues 57–60 (STRT), Gln84, Arg108, and 135–138 (HPCQ) each bind carbamoyl phosphate. L-ornithine-binding positions include Asn166, Asp224, and 228-229 (SM). Carbamoyl phosphate contacts are provided by residues 264-265 (CL) and Arg292.

Belongs to the aspartate/ornithine carbamoyltransferase superfamily. OTCase family.

The protein resides in the cytoplasm. It catalyses the reaction carbamoyl phosphate + L-ornithine = L-citrulline + phosphate + H(+). Its pathway is amino-acid degradation; L-arginine degradation via ADI pathway; carbamoyl phosphate from L-arginine: step 2/2. In terms of biological role, reversibly catalyzes the transfer of the carbamoyl group from carbamoyl phosphate (CP) to the N(epsilon) atom of ornithine (ORN) to produce L-citrulline. The sequence is that of Ornithine carbamoyltransferase from Ralstonia pickettii (strain 12J).